The sequence spans 140 residues: ATP synthase epsilon chain (140 aa).

It belongs to the ATPase epsilon chain family. In terms of assembly, F-type ATPases have 2 components, CF(1) - the catalytic core - and CF(0) - the membrane proton channel. CF(1) has five subunits: alpha(3), beta(3), gamma(1), delta(1), epsilon(1). CF(0) has three main subunits: a, b and c.

Its subcellular location is the cell inner membrane. Produces ATP from ADP in the presence of a proton gradient across the membrane. The sequence is that of ATP synthase epsilon chain from Yersinia enterocolitica serotype O:8 / biotype 1B (strain NCTC 13174 / 8081).